The sequence spans 510 residues: G-protein coupled receptor dmsr-1 (510 aa).

Topologically, residues 1–35 (MEFTECKTTFIHLPDKSFLYDVFVSVYNFYHPIHA) are extracellular. Residues 36–56 (YLSIFLCVLGTIANFCNIVVL) form a helical membrane-spanning segment. The Cytoplasmic portion of the chain corresponds to 57–64 (TRRTMRTP). A helical transmembrane segment spans residues 65–85 (VNMILTAMASCDTVVLFSNLI). Residues 86–107 (YTTHYSFVAFKFCHPKHWSYSW) lie on the Extracellular side of the membrane. Residues 108-128 (ALFLIAHAHLSLVAHSSSVWL) form a helical membrane-spanning segment. Residues 129–155 (SVMLALVRYVTLRSRGNMGGMQVTLRH) are Cytoplasmic-facing. The chain crosses the membrane as a helical span at residues 156–176 (SYYAVAVTVSLVAVLNAPNFL). The Extracellular segment spans residues 177 to 223 (NYKINEQPLNETCTDLDPMFWNSPAYLPGIADIAKANSCLVFRLSYW). Asparagine 186 is a glycosylation site (N-linked (GlcNAc...) asparagine). A helical transmembrane segment spans residues 224–244 (ISGMVFKVLPCALLSLFVWLL). At 245–307 (LRILREVREN…GERVDRTTHM (63 aa)) the chain is on the cytoplasmic side. The chain crosses the membrane as a helical span at residues 308-328 (LLAIVAVMLVTELPQGIMAVL). Residues 329–343 (SGMCSEEFRIYIYNN) lie on the Extracellular side of the membrane. A helical membrane pass occupies residues 344–364 (LGDILDLFSLCGSCCSFIIYC). At 365 to 510 (SMSGQFRNEF…DGIRGHFQNI (146 aa)) the chain is on the cytoplasmic side. The segment at 452-510 (GCDSITPCSPMPTSFPSSPLPPIRSGEDESTDETSHLLNSSGPNSTASADGIRGHFQNI) is disordered. Residues 487-499 (HLLNSSGPNSTAS) show a composition bias toward polar residues.

Belongs to the G-protein coupled receptor 1 family. In terms of tissue distribution, expressed in head neurons including the RID neuron and the paired AIY neurons, and in tail neurons including the paired PHA and PHB neurons. Not expressed in AVE and AVA neurons.

The protein localises to the cell membrane. In terms of biological role, G-protein coupled receptor. Functionally, G-protein coupled receptor for flp-13 RFamide neuropeptides in vitro. Upon activation by flp-13 RFamide neuropeptides, promotes sleep in response to cellular stress also known as stress-induced sleep (SIS), probably by inhibiting the activity of wake-promoting neurons. The polypeptide is G-protein coupled receptor dmsr-1 (Caenorhabditis elegans).